Consider the following 330-residue polypeptide: Deoxyhypusine hydroxylase (330 aa).

3 HEAT-like PBS-type repeats span residues 57–83 (LKHE…VLRN), 90–116 (VRHE…YLSD), and 199–225 (ERYR…GFSG). His-59, Glu-60, His-92, and Glu-93 together coordinate Fe cation. Fe cation-binding residues include His-232, Glu-233, His-265, and Glu-266. Residues 263-289 (VRHEAAEALGGIATPEVLPPLKEWVAR) form an HEAT-like PBS-type 4 repeat.

It belongs to the deoxyhypusine hydroxylase family. Requires Fe(2+) as cofactor.

The protein resides in the cytoplasm. It localises to the nucleus. The catalysed reaction is [eIF5A protein]-deoxyhypusine + AH2 + O2 = [eIF5A protein]-hypusine + A + H2O. The protein operates within protein modification; eIF5A hypusination. Its function is as follows. Catalyzes the hydroxylation of the N(6)-(4-aminobutyl)-L-lysine intermediate to form hypusine, an essential post-translational modification only found in mature eIF-5A factor. This Lentinula edodes (Shiitake mushroom) protein is Deoxyhypusine hydroxylase.